Here is a 284-residue protein sequence, read N- to C-terminus: Bifunctional protein FolD (284 aa).

NADP(+) is bound by residues 166–168 (GAS) and Ile-232.

Belongs to the tetrahydrofolate dehydrogenase/cyclohydrolase family. Homodimer.

It catalyses the reaction (6R)-5,10-methylene-5,6,7,8-tetrahydrofolate + NADP(+) = (6R)-5,10-methenyltetrahydrofolate + NADPH. The catalysed reaction is (6R)-5,10-methenyltetrahydrofolate + H2O = (6R)-10-formyltetrahydrofolate + H(+). It participates in one-carbon metabolism; tetrahydrofolate interconversion. In terms of biological role, catalyzes the oxidation of 5,10-methylenetetrahydrofolate to 5,10-methenyltetrahydrofolate and then the hydrolysis of 5,10-methenyltetrahydrofolate to 10-formyltetrahydrofolate. The chain is Bifunctional protein FolD from Shewanella baltica (strain OS195).